We begin with the raw amino-acid sequence, 736 residues long: Putative ATP-dependent RNA helicase CG14443 (736 aa).

Disordered stretches follow at residues 32–58, 73–166, 183–237, and 265–296; these read TKSS…SSVL, GIEG…GERP, NSFK…NSWR, and SFTR…NTWK. Composition is skewed to low complexity over residues 34–58 and 125–160; these read SSIW…SSVL and SSES…SHGS. Over residues 190–199 the composition is skewed to basic and acidic residues; the sequence is TSRENKESRS. The segment covering 277 to 296 has biased composition (polar residues); sequence LCYQDQSKNPSRPSNYNTWK. Positions 330–358 match the Q motif motif; that stretch reads LSFERSGFNATILQQLEDQGYDGPTPIQA. The Helicase ATP-binding domain maps to 361–534; sequence WSIAKEGKNI…NKFLGQYTAI (174 aa). An ATP-binding site is contributed by 374–381; sequence SGKGTGKT. Residues 482–485 carry the DEAD box motif; that stretch reads DNID. Positions 561 to 719 constitute a Helicase C-terminal domain; the sequence is KVERLMKELT…LLQLAEEKMF (159 aa).

This sequence belongs to the DEAD box helicase family.

It catalyses the reaction ATP + H2O = ADP + phosphate + H(+). In terms of biological role, probable ATP-binding RNA helicase. The chain is Putative ATP-dependent RNA helicase CG14443 from Drosophila melanogaster (Fruit fly).